The following is a 338-amino-acid chain: RNA 3'-terminal phosphate cyclase (338 aa).

Residues glutamine 103 and 283-287 (YLADQ) contribute to the ATP site. Histidine 308 acts as the Tele-AMP-histidine intermediate in catalysis.

The protein belongs to the RNA 3'-terminal cyclase family. Type 1 subfamily.

It is found in the cytoplasm. It carries out the reaction a 3'-end 3'-phospho-ribonucleotide-RNA + ATP = a 3'-end 2',3'-cyclophospho-ribonucleotide-RNA + AMP + diphosphate. Catalyzes the conversion of 3'-phosphate to a 2',3'-cyclic phosphodiester at the end of RNA. The mechanism of action of the enzyme occurs in 3 steps: (A) adenylation of the enzyme by ATP; (B) transfer of adenylate to an RNA-N3'P to produce RNA-N3'PP5'A; (C) and attack of the adjacent 2'-hydroxyl on the 3'-phosphorus in the diester linkage to produce the cyclic end product. The biological role of this enzyme is unknown but it is likely to function in some aspects of cellular RNA processing. The sequence is that of RNA 3'-terminal phosphate cyclase from Escherichia coli (strain SMS-3-5 / SECEC).